The sequence spans 1279 residues: ATP-dependent helicase/nuclease subunit A (1279 aa).

The UvrD-like helicase ATP-binding domain maps to 4–499; sequence TKWTDEQRQA…VKLFKNFRSR (496 aa). 25–32 serves as a coordination point for ATP; it reads AGAGAGKT. Positions 526–853 constitute a UvrD-like helicase C-terminal domain; it reads EEALKVGASY…RIMSIHKSKG (328 aa).

The protein belongs to the helicase family. AddA subfamily. As to quaternary structure, heterodimer of AddA and AddB/RexB. Mg(2+) serves as cofactor.

The enzyme catalyses Couples ATP hydrolysis with the unwinding of duplex DNA by translocating in the 3'-5' direction.. The catalysed reaction is ATP + H2O = ADP + phosphate + H(+). The heterodimer acts as both an ATP-dependent DNA helicase and an ATP-dependent, dual-direction single-stranded exonuclease. Recognizes the chi site generating a DNA molecule suitable for the initiation of homologous recombination. The AddA nuclease domain is required for chi fragment generation; this subunit has the helicase and 3' -&gt; 5' nuclease activities. This Clostridium botulinum (strain Hall / ATCC 3502 / NCTC 13319 / Type A) protein is ATP-dependent helicase/nuclease subunit A.